A 930-amino-acid polypeptide reads, in one-letter code: Protein translocase subunit SecA (930 aa).

Residues Gln-83, 101 to 105, and Asp-491 each bind ATP; that span reads GEGKT.

It belongs to the SecA family. In terms of assembly, monomer and homodimer. Part of the essential Sec protein translocation apparatus which comprises SecA, SecYEG and auxiliary proteins SecDF. Other proteins may also be involved.

Its subcellular location is the cell inner membrane. The protein resides in the cellular thylakoid membrane. It localises to the cytoplasm. It carries out the reaction ATP + H2O + cellular proteinSide 1 = ADP + phosphate + cellular proteinSide 2.. In terms of biological role, part of the Sec protein translocase complex. Interacts with the SecYEG preprotein conducting channel. Has a central role in coupling the hydrolysis of ATP to the transfer of proteins into and across the cell membrane, serving as an ATP-driven molecular motor driving the stepwise translocation of polypeptide chains across the membrane. Probably participates in protein translocation into and across both the cytoplasmic and thylakoid membranes in cyanobacterial cells. This Nostoc sp. (strain PCC 7120 / SAG 25.82 / UTEX 2576) protein is Protein translocase subunit SecA.